The primary structure comprises 107 residues: uncharacterized protein (107 aa).

2 consecutive transmembrane segments (helical) span residues 11–31 (CVNFVIIIGIPLLIEASILCI) and 58–78 (LFFLSFYMLHFPITLSILAFQ).

Its subcellular location is the mitochondrion membrane. This is an uncharacterized protein from Saccharomyces cerevisiae (strain ATCC 204508 / S288c) (Baker's yeast).